We begin with the raw amino-acid sequence, 338 residues long: D-xylulose reductase (338 aa).

3 residues coordinate Zn(2+): C40, H65, and E151.

This sequence belongs to the zinc-containing alcohol dehydrogenase family. Homotetramer. Requires Zn(2+) as cofactor.

It carries out the reaction xylitol + NAD(+) = D-xylulose + NADH + H(+). This Morganella morganii (Proteus morganii) protein is D-xylulose reductase.